The sequence spans 307 residues: Elongation factor Ts (307 aa).

Residues 80–83 (TDFV) form an involved in Mg(2+) ion dislocation from EF-Tu region.

Belongs to the EF-Ts family.

It localises to the cytoplasm. Functionally, associates with the EF-Tu.GDP complex and induces the exchange of GDP to GTP. It remains bound to the aminoacyl-tRNA.EF-Tu.GTP complex up to the GTP hydrolysis stage on the ribosome. This Methylobacterium sp. (strain 4-46) protein is Elongation factor Ts.